A 336-amino-acid polypeptide reads, in one-letter code: Meiotically up-regulated gene 33 protein (336 aa).

The segment at 232-336 (ISEDDGLKRG…KPSRFSWGRS (105 aa)) is disordered. Residues 250–262 (TFSNDSRSLSSYA) show a composition bias toward polar residues.

It is found in the cytoplasm. Its function is as follows. Has a role in meiosis. This Schizosaccharomyces pombe (strain 972 / ATCC 24843) (Fission yeast) protein is Meiotically up-regulated gene 33 protein (mug33).